The following is a 434-amino-acid chain: MAIHSSSDALVYQSGFGNQFSSEALPDALPVGQNSPQKHPLGLYAEQFSGTAFTVARSEARRTWLYRIKPSAAHSRYQRMDRQMAGQEPGPINPNRLRWNAFDIPAAPTDFIDGLIPLASTSAAEQAEGVSVYLYTANTSMQRAFFSADGEWLVVPQQGRLRIVTELGLLDIEPLEIAVLPRGLKFCVQLLDSSARGYLCENHGCALRLPELGPIGSNGLANSRDFLTPVAWFEDSRQPMQLVQKFLGELWSTQLEHSPFDVVGWHGNNVPYKYDLRRFNTIGTVSYDHPDPSIFTVLTSPGAIHGQANIDFVIFPPRWMVAENTFRPPWFHRNLMNEFMGLIDGAYDAKAEGFMPGGASLHNCMSAHGPDNVTAEKAIAAELKPHRIDNTMAFMFETGKVLRPSRHALDCPQLQTDYDACWKDMARTFTQEPR.

His-289 acts as the Proton acceptor in catalysis. His-332 and Glu-338 together coordinate Fe cation. Homogentisate-binding residues include Tyr-347 and His-368. His-368 provides a ligand contact to Fe cation.

The protein belongs to the homogentisate dioxygenase family. Hexamer; dimer of trimers. Fe cation is required as a cofactor.

The enzyme catalyses homogentisate + O2 = 4-maleylacetoacetate + H(+). It participates in amino-acid degradation; L-phenylalanine degradation; acetoacetate and fumarate from L-phenylalanine: step 4/6. Its function is as follows. Involved in the catabolism of homogentisate (2,5-dihydroxyphenylacetate or 2,5-OH-PhAc), a central intermediate in the degradation of phenylalanine and tyrosine. Catalyzes the oxidative ring cleavage of the aromatic ring of homogentisate to yield maleylacetoacetate. The chain is Homogentisate 1,2-dioxygenase from Pseudomonas syringae pv. syringae (strain B728a).